The primary structure comprises 369 residues: Maltose/maltodextrin import ATP-binding protein MalK (369 aa).

The 231-residue stretch at 4-234 (VQLRNVTKAW…PADRFVAGFI (231 aa)) folds into the ABC transporter domain. 36 to 43 (GPSGCGKS) is an ATP binding site.

The protein belongs to the ABC transporter superfamily. Maltooligosaccharide importer (TC 3.A.1.1.1) family. The complex is composed of two ATP-binding proteins (MalK), two transmembrane proteins (MalG and MalK) and a solute-binding protein (MalE).

It localises to the cell inner membrane. It carries out the reaction D-maltose(out) + ATP + H2O = D-maltose(in) + ADP + phosphate + H(+). Its function is as follows. Part of the ABC transporter complex MalEFGK involved in maltose/maltodextrin import. Responsible for energy coupling to the transport system. In Salmonella choleraesuis (strain SC-B67), this protein is Maltose/maltodextrin import ATP-binding protein MalK.